Here is a 504-residue protein sequence, read N- to C-terminus: Glutamate--tRNA ligase (504 aa).

The short motif at 12-22 (PSPTGALHIGG) is the 'HIGH' region element. The 'KMSKS' region signature appears at 260–264 (KLSKR). Lysine 263 is a binding site for ATP.

Belongs to the class-I aminoacyl-tRNA synthetase family. Glutamate--tRNA ligase type 1 subfamily. As to quaternary structure, monomer.

The protein localises to the cytoplasm. It catalyses the reaction tRNA(Glu) + L-glutamate + ATP = L-glutamyl-tRNA(Glu) + AMP + diphosphate. Catalyzes the attachment of glutamate to tRNA(Glu) in a two-step reaction: glutamate is first activated by ATP to form Glu-AMP and then transferred to the acceptor end of tRNA(Glu). The chain is Glutamate--tRNA ligase from Bacteroides thetaiotaomicron (strain ATCC 29148 / DSM 2079 / JCM 5827 / CCUG 10774 / NCTC 10582 / VPI-5482 / E50).